A 405-amino-acid chain; its full sequence is FAD-dependent monooxygenase thnD (405 aa).

Glutamate 30, alanine 45, arginine 106, aspartate 308, and glycine 321 together coordinate FAD.

It belongs to the paxM FAD-dependent monooxygenase family. FAD is required as a cofactor.

Its function is as follows. FAD-dependent monooxygenase; part of the gene cluster that produces the tetronate natural products trihazones. Transcription analysis of thnD confirmed this gene is expressed, hence its role in the biosynthetic pathway remains cryptic. The pathway begins with the formation of trihazone A by the hybrid PKS-NRPS synthetase thnA and the trans-enoyl reductase thnE. Trihazone A is further decarboxylated by the 2-oxoglutarate-dependent dioxygenase thnC to produce trihazone D. The function of the FAD-dependent monooxygenase thnD has still to be identified. In Trichoderma harzianum (Hypocrea lixii), this protein is FAD-dependent monooxygenase thnD.